The chain runs to 277 residues: Heme oxygenase (277 aa).

H29 contributes to the heme b binding site.

It belongs to the heme oxygenase family.

The protein localises to the microsome. Its subcellular location is the endoplasmic reticulum. It carries out the reaction heme b + 3 reduced [NADPH--hemoprotein reductase] + 3 O2 = biliverdin IXalpha + CO + Fe(2+) + 3 oxidized [NADPH--hemoprotein reductase] + 3 H2O + H(+). Functionally, heme oxygenase cleaves the heme ring at the alpha methene bridge to form biliverdin. Biliverdin is subsequently converted to bilirubin by biliverdin reductase. Under physiological conditions, the activity of heme oxygenase is highest in the spleen, where senescent erythrocytes are sequestrated and destroyed. This chain is Heme oxygenase (hmox), found in Takifugu rubripes (Japanese pufferfish).